A 630-amino-acid polypeptide reads, in one-letter code: MDFPSRFDVIVIGGGHAGTEAALASARMGVKTLLLTHNVETLGHMSCNPAIGGIGKSHLVKEIDALGGAMALATDKSGIQFRVLNNRKGPAVRATRAQADRAIYKAVVREILENQPNLWIFQQSCDDLIVEQDQVKGVVTQMGLRFFAESVVLTTGTFLGGLIHIGLQNHSGGRAGDPPSIALAHRMRELPLRVGRLKTGTPPRIDGRSVDFSVMTEQPGDTPIPVMSFMGNAEMHPRQVSCWITHTNARTHEIIASNLDRSPMYSGVIEGVGPRYCPSIEDKIHRFADKESHQVFIEPEGLNTHELYPNGISTSLPFDVQLELVRSIRGMENAHIVRPGYAIEYDYFDPRDLKYSLETKVIGGLFFAGQINGTTGYEEAGAQGLLAGTNAALRAQGRDSWCPRRDEAYIGVLVDDLITLGTQEPYRMFTSRAEYRLILREDNADLRLTEKGRELGLIDDLRWAAFCAKRDGIEREEQRLKSTWVRPNTEQGQAVVDKFGTPLSHEYSLLNLLARPEIDYAGLIEATGGEAIDPQVAEQVEIRTKYAGYIDRQQDEIARLRASEDTRLPVDIDYTTISGLSKEIQGKLSQTRPETLGQASRIPGVTPAAISLMLIHLKKRGAGRELEQSA.

13-18 (GGGHAG) contributes to the FAD binding site. An NAD(+)-binding site is contributed by 273–287 (GPRYCPSIEDKIHRF).

Belongs to the MnmG family. As to quaternary structure, homodimer. Heterotetramer of two MnmE and two MnmG subunits. Requires FAD as cofactor.

The protein localises to the cytoplasm. Functionally, NAD-binding protein involved in the addition of a carboxymethylaminomethyl (cmnm) group at the wobble position (U34) of certain tRNAs, forming tRNA-cmnm(5)s(2)U34. This is tRNA uridine 5-carboxymethylaminomethyl modification enzyme MnmG from Pseudomonas putida (strain ATCC 700007 / DSM 6899 / JCM 31910 / BCRC 17059 / LMG 24140 / F1).